A 469-amino-acid chain; its full sequence is GTPase Der (469 aa).

EngA-type G domains are found at residues 30 to 193 (PVLA…PEVA) and 203 to 376 (RRVA…ASWD). Residues 36 to 43 (GRPNVGKS), 83 to 87 (DTGGW), 145 to 148 (NKVD), 209 to 216 (GKPNVGKS), 256 to 260 (DTAGL), and 321 to 324 (NKWD) contribute to the GTP site. In terms of domain architecture, KH-like spans 377-459 (TRIPTGPLNS…PIRINVRVRE (83 aa)).

Belongs to the TRAFAC class TrmE-Era-EngA-EngB-Septin-like GTPase superfamily. EngA (Der) GTPase family. In terms of assembly, associates with the 50S ribosomal subunit.

GTPase that plays an essential role in the late steps of ribosome biogenesis. The sequence is that of GTPase Der from Mycobacterium ulcerans (strain Agy99).